The primary structure comprises 1248 residues: MHLLRTQPGGFVPDDGIAHLAQTPAELVILCSGDSHLALLAEAARALPDDYPSLRLANPMQLQNHASVDLYVEEVLRHARVILLSLHGGIGYWRYGVEQLVALAERGALLIPVPGDDRPDPELSALGNLPAEQAERFWQYLRQGGLENAGQFYRCLASQCLGRDYAWREPQALPRVALFHPRHAEATLEHWRADWQAGRPVVALLFYRTHLQAANTAFIARFCERLAAQGLNPLPIALASLKESACLAQVEDWLERSDAALIVNTTGFAQSNPEAPELRPFRRDVPVLQAICSLDNRPLWLDNPQGLGPRDLAMHVALPELDGRIVTRPISFKGLAWRSERSESDVVCYLADDERMDFVAELARRWAELARKPNAEKRVALVLANYPTRDGRIGNGVGLDTPAAALNILRALRQQGYPVDGLPASGTELIRQLLGGVSNDLEHLDLRPCAQSLALDDYLACFARLPERNRQAVLARWGEPQQDPMFRDGRMMVAGLRYGLTFVGIQPARGYQLDPAAVYHDPDLVPPHGYLAFYFWLRHAYRADALLHVGKHGNLEWLPGKGVGLSAECWPDALLGPLPNIYPFIVNDPGEGAQAKRRTQAVIIDHLMPPLTRAESYGPLRDLERLADEFYDASLLDPRRAEQLRGEILVLLRDNRLDREIGLQLSDDPDSWLPQLDAYLCDLKESQIRDGLHVFGESPSGRLRLDTLLALLRVPRGDGKGANAGLLKSLADDLGLGFDPLACDMGEAWQGARPACLEERGGEPWRTLGDTRERLELLALHWIERCLGGESPPATWRASGEVLRGLCEQVAPTLDACGGAEIDGLLAALEGRFVPAGPSGAPSRGRLDVLPTGRNFFSVDVRNLPTPTAWRIGFQSANLLLERHLQEHGDHLRQLGLSVWGTATMRTGGDDIAQALALLGVRPVWQAGSQRVADFEILPVSLLDRPRVDVTLRVSGFFRDAFANLIRLFDAAVQAVAELDEAEELNPLAARVRLERQRLEAQGTAPAEARRQAGWRIFGAKPGAYGAGVQGAIEERLWETRADLAEVYLNWGGYAYGAADDGTPARERFAQRLERLQAVLHNQDNREHDLLDSNDYYQFQGGMLAAVETLRGAPVASYHGDHSQPDNPRIRTLKEELNRVVRARAVNPKWIAGMKRHGYKGAFELAATVDYLCAFDATSELIDDHQYALLADAYLLDAETREFVRQHNPQALRDMAERLVEAQRRGLWQEPGAYREALENLLLDVEEE.

The protein belongs to the CobN family. In terms of assembly, heterotrimer of CobN, CobS and CobT.

The protein resides in the cytoplasm. It carries out the reaction hydrogenobyrinate a,c-diamide + Co(2+) + ATP + H2O = cob(II)yrinate a,c diamide + ADP + phosphate + 5 H(+). Its pathway is cofactor biosynthesis; adenosylcobalamin biosynthesis; cob(II)yrinate a,c-diamide from precorrin-2 (aerobic route): step 10/10. Catalyzes cobalt insertion in the corrin ring. The sequence is that of Aerobic cobaltochelatase subunit CobN (cobN) from Pseudomonas aeruginosa (strain ATCC 15692 / DSM 22644 / CIP 104116 / JCM 14847 / LMG 12228 / 1C / PRS 101 / PAO1).